Reading from the N-terminus, the 267-residue chain is NAD(P)H-hydrate epimerase (267 aa).

In terms of domain architecture, YjeF N-terminal spans 27–242 (AQKIDEDLMS…DLEAKFDLQL (216 aa)). 78 to 82 (NQGGD) is a binding site for (6S)-NADPHX. The K(+) site is built by Gln-79 and Asp-142. (6S)-NADPHX contacts are provided by residues 146–152 (GFNFKGD) and Asp-185. Ser-188 contacts K(+).

It belongs to the NnrE/AIBP family. The cofactor is K(+).

It localises to the cytoplasm. Its subcellular location is the mitochondrion. It catalyses the reaction (6R)-NADHX = (6S)-NADHX. It carries out the reaction (6R)-NADPHX = (6S)-NADPHX. Its function is as follows. Catalyzes the epimerization of the S- and R-forms of NAD(P)HX, a damaged form of NAD(P)H that is a result of enzymatic or heat-dependent hydration. This is a prerequisite for the S-specific NAD(P)H-hydrate dehydratase to allow the repair of both epimers of NAD(P)HX. The protein is NAD(P)H-hydrate epimerase of Mycosarcoma maydis (Corn smut fungus).